A 72-amino-acid chain; its full sequence is Translation initiation factor IF-1 (72 aa).

One can recognise an S1-like domain in the interval 1–72 (MAKEDSIEMQ…TKGRIVFRAR (72 aa)).

It belongs to the IF-1 family. As to quaternary structure, component of the 30S ribosomal translation pre-initiation complex which assembles on the 30S ribosome in the order IF-2 and IF-3, IF-1 and N-formylmethionyl-tRNA(fMet); mRNA recruitment can occur at any time during PIC assembly.

The protein localises to the cytoplasm. Its function is as follows. One of the essential components for the initiation of protein synthesis. Stabilizes the binding of IF-2 and IF-3 on the 30S subunit to which N-formylmethionyl-tRNA(fMet) subsequently binds. Helps modulate mRNA selection, yielding the 30S pre-initiation complex (PIC). Upon addition of the 50S ribosomal subunit IF-1, IF-2 and IF-3 are released leaving the mature 70S translation initiation complex. This is Translation initiation factor IF-1 from Shewanella amazonensis (strain ATCC BAA-1098 / SB2B).